A 274-amino-acid polypeptide reads, in one-letter code: NH(3)-dependent NAD(+) synthetase (274 aa).

An ATP-binding site is contributed by 46-53 (GISGGQDS). Position 52 (Asp52) interacts with Mg(2+). A deamido-NAD(+)-binding site is contributed by Arg140. An ATP-binding site is contributed by Thr160. Residue Glu165 coordinates Mg(2+). Deamido-NAD(+) contacts are provided by Lys173 and Asp180. The ATP site is built by Lys189 and Thr211. Deamido-NAD(+) is bound at residue 260-261 (HK).

This sequence belongs to the NAD synthetase family. Homodimer.

The catalysed reaction is deamido-NAD(+) + NH4(+) + ATP = AMP + diphosphate + NAD(+) + H(+). It participates in cofactor biosynthesis; NAD(+) biosynthesis; NAD(+) from deamido-NAD(+) (ammonia route): step 1/1. Functionally, catalyzes the ATP-dependent amidation of deamido-NAD to form NAD. Uses ammonia as a nitrogen source. The protein is NH(3)-dependent NAD(+) synthetase of Streptococcus gordonii (strain Challis / ATCC 35105 / BCRC 15272 / CH1 / DL1 / V288).